We begin with the raw amino-acid sequence, 200 residues long: Pyrrolidone-carboxylate peptidase (200 aa).

Active-site residues include Glu78, Cys141, and His165.

The protein belongs to the peptidase C15 family. Homotetramer.

The protein resides in the cytoplasm. The catalysed reaction is Release of an N-terminal pyroglutamyl group from a polypeptide, the second amino acid generally not being Pro.. In terms of biological role, removes 5-oxoproline from various penultimate amino acid residues except L-proline. This Thermococcus onnurineus (strain NA1) protein is Pyrrolidone-carboxylate peptidase.